A 363-amino-acid polypeptide reads, in one-letter code: MDAKLSPEQGLNISGIALASLLAVGLGTTAFFLDSMANRLPWQSMSLTLPLLLCAMGSGVVGFWVIPLLQALKTGQIIREDGPQAHLKKAGTPTMGGIFFIPVGVIIACILSNFATDVLAVSALTTSYGFIGWLDDWQILRRKSNKGISPRTKLALQVGFAAVFCLWLMFNQPSNITNIALPWVSFTLPLGFLFWPLAGFVLVAESNATNLTDGIDGLAAGTVAIALLALGALIAPTAPGLMVFCAALSGGCLGFLAHNRNPARVFMGDTGSLALGGALAAVALLTNTLVALFILSGIFFVETLSVMAQVSYYKATKGPDGKGKRLFKMAPLHHHLELTGWSELQVVGVFYVIAAILAAICLA.

Transmembrane regions (helical) follow at residues 13 to 33 (ISGIALASLLAVGLGTTAFFL), 49 to 69 (LPLLLCAMGSGVVGFWVIPLL), 95 to 115 (MGGIFFIPVGVIIACILSNFA), 119 to 139 (LAVSALTTSYGFIGWLDDWQI), 154 to 174 (LALQVGFAAVFCLWLMFNQPS), 183 to 203 (WVSFTLPLGFLFWPLAGFVLV), 224 to 244 (AIALLALGALIAPTAPGLMVF), 281 to 301 (AVALLTNTLVALFILSGIFFV), and 343 to 363 (ELQVVGVFYVIAAILAAICLA).

It belongs to the glycosyltransferase 4 family. MraY subfamily. Mg(2+) is required as a cofactor.

The protein resides in the cell inner membrane. It carries out the reaction UDP-N-acetyl-alpha-D-muramoyl-L-alanyl-gamma-D-glutamyl-meso-2,6-diaminopimeloyl-D-alanyl-D-alanine + di-trans,octa-cis-undecaprenyl phosphate = di-trans,octa-cis-undecaprenyl diphospho-N-acetyl-alpha-D-muramoyl-L-alanyl-D-glutamyl-meso-2,6-diaminopimeloyl-D-alanyl-D-alanine + UMP. Its pathway is cell wall biogenesis; peptidoglycan biosynthesis. Functionally, catalyzes the initial step of the lipid cycle reactions in the biosynthesis of the cell wall peptidoglycan: transfers peptidoglycan precursor phospho-MurNAc-pentapeptide from UDP-MurNAc-pentapeptide onto the lipid carrier undecaprenyl phosphate, yielding undecaprenyl-pyrophosphoryl-MurNAc-pentapeptide, known as lipid I. The protein is Phospho-N-acetylmuramoyl-pentapeptide-transferase of Nostoc punctiforme (strain ATCC 29133 / PCC 73102).